A 961-amino-acid chain; its full sequence is Mitogen-activated protein kinase kinase kinase 13-B (961 aa).

A disordered region spans residues 89–115 (RDQDEPENTAPQGSSHSGDGGNNSANE). Over residues 101–114 (GSSHSGDGGNNSAN) the composition is skewed to low complexity. The Protein kinase domain occupies 171-412 (ISELQWLGSG…FRQILMHLDI (242 aa)). ATP is bound by residues 177–185 (LGSGAQGAV) and Lys198. Residue Asp282 is the Proton acceptor of the active site. Leucine-zipper regions lie at residues 436–457 (VKKHFEKIKSEGTCIHRLDEEL) and 489–510 (LSSIMLQLEVREKELTRREQTV). The stretch at 460-497 (RRREELRHALDIREHYERKLERANNLYMELSSIMLQLE) forms a coiled coil. Disordered stretches follow at residues 507–644 (EQTV…ETSQ), 796–874 (TPPA…DVAC), and 933–961 (NAESDCDSSEGECSDATVRTNNPVNSSTW). The span at 563–580 (AEGSAASASPISGSPKTS) shows a compositional bias: low complexity. Positions 586-598 (GRYRSKPRHRRGN) are enriched in basic residues. The segment covering 613-628 (QESPAPSQQSSQHQTP) has biased composition (low complexity). Residues 813 to 826 (DSSEGEEGEVDSEV) show a composition bias toward acidic residues. The segment at 814-827 (SSEGEEGEVDSEVE) is acidic. Residues 839–854 (STCQSYSTFSSENFSV) show a composition bias toward polar residues. Residues 934–945 (AESDCDSSEGEC) show a composition bias toward acidic residues. Residues 949–961 (TVRTNNPVNSSTW) show a composition bias toward polar residues.

It belongs to the protein kinase superfamily. Ser/Thr protein kinase family.

Its subcellular location is the cytoplasm. It is found in the membrane. The catalysed reaction is L-seryl-[protein] + ATP = O-phospho-L-seryl-[protein] + ADP + H(+). It catalyses the reaction L-threonyl-[protein] + ATP = O-phospho-L-threonyl-[protein] + ADP + H(+). In terms of biological role, may have a role in the JNK signaling pathway. This chain is Mitogen-activated protein kinase kinase kinase 13-B (map3k13-b), found in Xenopus laevis (African clawed frog).